Consider the following 67-residue polypeptide: Large ribosomal subunit protein uL29 (67 aa).

This sequence belongs to the universal ribosomal protein uL29 family.

The protein is Large ribosomal subunit protein uL29 of Wolbachia sp. subsp. Drosophila simulans (strain wRi).